A 311-amino-acid polypeptide reads, in one-letter code: Taste receptor type 2 member 9 (311 aa).

Over 1–9 (MPSTIEAIY) the chain is Extracellular. A helical transmembrane segment spans residues 10–32 (IILIAGELTIGIWGNGFIVLVNC). Residues 33–52 (IDWLKRRDVSLIDIILISLA) lie on the Cytoplasmic side of the membrane. A helical membrane pass occupies residues 53-72 (ISRICLLCVISLDGFFILLF). The Extracellular segment spans residues 73-86 (PGTYDTNVLESIMD). Residues 87–109 (AVWTFANNSSLWFTSCLSIFYLL) traverse the membrane as a helical segment. The Cytoplasmic portion of the chain corresponds to 110–128 (KIANISHPFFFWLKLKINK). A helical transmembrane segment spans residues 129–146 (VILAILLGSFLISLIISF). Over 147 to 179 (PINGMWYNLFKVSHEENITWAFKVSTIPGAFKQ) the chain is Extracellular. Asn-163 is a glycosylation site (N-linked (GlcNAc...) asparagine). A helical membrane pass occupies residues 180-202 (LTLNLGAMVPFILCLISFFLLLF). The Cytoplasmic portion of the chain corresponds to 203 to 233 (SLVRHTKQIQLHATGFRDPSTEAHMRAVKAV). Residues 234 to 256 (IIFLLLLILYYPVFLVMTSSTLI) traverse the membrane as a helical segment. The Extracellular segment spans residues 257-260 (PQGK). A helical transmembrane segment spans residues 261–283 (LVLMIGDIVTVIFPSSHSFILIM). Residues 284-311 (GNSKLRAAFLKMLRFVKGFLRRRKPFVP) are Cytoplasmic-facing.

It belongs to the G-protein coupled receptor T2R family.

The protein resides in the membrane. Its function is as follows. Gustducin-coupled receptor implicated in the perception of bitter compounds in the oral cavity and the gastrointestinal tract. Signals through PLCB2 and the calcium-regulated cation channel TRPM5. This Macaca mulatta (Rhesus macaque) protein is Taste receptor type 2 member 9 (TAS2R9).